The sequence spans 216 residues: UPF0502 protein Smal_0052 (216 aa).

Belongs to the UPF0502 family.

The chain is UPF0502 protein Smal_0052 from Stenotrophomonas maltophilia (strain R551-3).